We begin with the raw amino-acid sequence, 322 residues long: Transcription factor Atoh8 (322 aa).

Disordered regions lie at residues 77-96 (PVPASVAPAVPPGGGTDTAR), 101-144 (IRAP…EAHS), and 159-221 (PPAR…ATAA). Positions 101–111 (IRAPEVSDARK) are enriched in basic and acidic residues. Residues 231–244 (TRRLLANARERTRV) are basic motif; degenerate. One can recognise a bHLH domain in the interval 231–283 (TRRLLANARERTRVHTISAAFEALRKQVPCYSYGQKLSKLAILRIACNYILSL). Positions 245-283 (HTISAAFEALRKQVPCYSYGQKLSKLAILRIACNYILSL) are helix-loop-helix motif.

In terms of assembly, efficient DNA binding requires dimerization with another bHLH protein. Interacts with NEUROG3 and NEUROD1. Interacts with ZFPM2; mediates indirect interaction with GATA4. Forms a heterodimer with TCF3; repress transcription of TCF3 and TCF3/NEUROG3 dimer-induced transactivation of E box-dependent promoters. Expressed by subsets of mature neurons. Expressed in kidney (podocytes). Expression is restricted to the atria, lung mesenchyme, and vascular smooth muscle.

The protein localises to the nucleus. It localises to the nucleus speckle. It is found in the cytoplasm. Transcription factor that binds a palindromic (canonical) core consensus DNA sequence 5'-CANNTG- 3' known as an E-box element, possibly as a heterodimer with other bHLH proteins. Regulates endothelial cell proliferation, migration and tube-like structures formation. Modulates endothelial cell differentiation through NOS3. May be implicated in specification and differentiation of neuronal cell lineages in the brain. May participate in kidney development and may be involved in podocyte differentiation. During early embryonic development is involved in tissue-specific differentiation processes that are dependent on class II bHLH factors and namely modulates the differentiation program initiated by the pro-endocrine factor NEUROG3. During myogenesis, may play a role during the transition of myoblasts from the proliferative phase to the differentiation phase. Positively regulates HAMP transcription in two ways, firstly by acting directly on the HAMP promoter via E-boxes binding and indirectly through increased phosphorylation of SMAD protein complex. Repress NEUROG3-dependent gene activation in a gene-specific manner through at least two mechanisms; requires only either the sequestering of a general partner such as TCF3 through heterodimerization, either also requires binding of the bHLH domain to DNA via a basic motif. The chain is Transcription factor Atoh8 from Mus musculus (Mouse).